Consider the following 67-residue polypeptide: ATP synthase F(0) complex subunit 8 (67 aa).

A helical transmembrane segment spans residues 8-24 (TWLIMISSMILTLFITF). The residue at position 54 (Lys54) is an N6-acetyllysine; alternate. Lys54 is subject to N6-succinyllysine; alternate. An N6-acetyllysine modification is found at Lys57.

The protein belongs to the ATPase protein 8 family. In terms of assembly, component of the ATP synthase complex composed at least of ATP5F1A/subunit alpha, ATP5F1B/subunit beta, ATP5MC1/subunit c (homooctomer), MT-ATP6/subunit a, MT-ATP8/subunit 8, ATP5ME/subunit e, ATP5MF/subunit f, ATP5MG/subunit g, ATP5MK/subunit k, ATP5MJ/subunit j, ATP5F1C/subunit gamma, ATP5F1D/subunit delta, ATP5F1E/subunit epsilon, ATP5PF/subunit F6, ATP5PB/subunit b, ATP5PD/subunit d, ATP5PO/subunit OSCP. ATP synthase complex consists of a soluble F(1) head domain (subunits alpha(3) and beta(3)) - the catalytic core - and a membrane F(0) domain - the membrane proton channel (subunits c, a, 8, e, f, g, k and j). These two domains are linked by a central stalk (subunits gamma, delta, and epsilon) rotating inside the F1 region and a stationary peripheral stalk (subunits F6, b, d, and OSCP). Interacts with PRICKLE3.

It localises to the mitochondrion membrane. Functionally, subunit 8, of the mitochondrial membrane ATP synthase complex (F(1)F(0) ATP synthase or Complex V) that produces ATP from ADP in the presence of a proton gradient across the membrane which is generated by electron transport complexes of the respiratory chain. ATP synthase complex consist of a soluble F(1) head domain - the catalytic core - and a membrane F(1) domain - the membrane proton channel. These two domains are linked by a central stalk rotating inside the F(1) region and a stationary peripheral stalk. During catalysis, ATP synthesis in the catalytic domain of F(1) is coupled via a rotary mechanism of the central stalk subunits to proton translocation. In vivo, can only synthesize ATP although its ATP hydrolase activity can be activated artificially in vitro. Part of the complex F(0) domain. The polypeptide is ATP synthase F(0) complex subunit 8 (Halichoerus grypus (Gray seal)).